Consider the following 694-residue polypeptide: Long-chain-fatty-acid--CoA ligase 3 (694 aa).

Residues Met1–Arg25 are disordered. Residue Ser2 is modified to N-acetylserine. Residue Tyr269–Val280 participates in ATP binding. Residues Asp527–Tyr576 carry the FACS motif.

The protein belongs to the ATP-dependent AMP-binding enzyme family. In terms of assembly, interacts with FRK1. It depends on Mg(2+) as a cofactor.

The protein localises to the cell membrane. It catalyses the reaction a long-chain fatty acid + ATP + CoA = a long-chain fatty acyl-CoA + AMP + diphosphate. The enzyme catalyses (9Z)-octadecenoate + ATP + CoA = (9Z)-octadecenoyl-CoA + AMP + diphosphate. The catalysed reaction is hexadecanoate + ATP + CoA = hexadecanoyl-CoA + AMP + diphosphate. It carries out the reaction (9Z)-hexadecenoate + ATP + CoA = (9Z)-hexadecenoyl-CoA + AMP + diphosphate. It catalyses the reaction (9Z)-tetradecenoate + ATP + CoA = (9Z)-tetradecenoyl-CoA + AMP + diphosphate. The enzyme catalyses (9Z,12Z)-octadecadienoate + ATP + CoA = (9Z,12Z)-octadecadienoyl-CoA + AMP + diphosphate. In terms of biological role, activates endogenous long-chain fatty acids (LCFA) by esterification of the fatty acids into metabolically active CoA-thioesters for subsequent degradation or incorporation into phospholipids. Acts preferentially on C16 and C18 fatty acids with a cis-double bond at C-9-C-10. This is Long-chain-fatty-acid--CoA ligase 3 (FAA3) from Saccharomyces cerevisiae (strain ATCC 204508 / S288c) (Baker's yeast).